The primary structure comprises 324 residues: Tetrachlorobenzoquinone reductase (324 aa).

The region spanning Val5–Val107 is the FAD-binding FR-type domain. The 2Fe-2S ferredoxin-type domain maps to Phe238–Ile324. [2Fe-2S] cluster-binding residues include Cys273, Cys278, Cys281, and Cys311.

The protein belongs to the PDR/VanB family. Homotrimer. Requires FMN as cofactor. It depends on [2Fe-2S] cluster as a cofactor.

It carries out the reaction 2,3,5,6-tetrachlorohydroquinone + NAD(+) + H(+) = 2,3,5,6-tetrachloro-1,4-benzoquinone + NADH. Its pathway is xenobiotic degradation; pentachlorophenol degradation. In vitro, activated by tetrachlorohydroquinone (TCHQ) at low concentrations and inhibited at high concentrations (above 200 uM). However, PcpD would only be stimulated by tetrachlorohydroquinone (TCHQ) under in vivo conditions due to the toxicity of tetrachlorohydroquinone (TCHQ). Competitively inhibited by pentachlorophenol (PCP) in a concentration-dependent manner. PcpD is regulated by tetrachlorohydroquinone (TCHQ) and pentachlorophenol (PCP) using a mechanism, which maintains tetrachlorobenzoquinone at a level that would neither significantly decrease the biodegradation of pentachlorophenol (PCP) nor cause cytotoxicity in cells. In terms of biological role, involved in the degradation of the xenobiocide pentachlorophenol (PCP). Catalyzes the reduction of tetrachlorobenzoquinone (TCBQ) to yield tetrachlorohydroquinone (TCHQ). Also able to reduce 2,6-dichloroindophenol (DCIP). This is Tetrachlorobenzoquinone reductase from Sphingobium chlorophenolicum.